We begin with the raw amino-acid sequence, 435 residues long: Keratin, type I cytoskeletal 18 (435 aa).

The segment covering 1–28 has biased composition (low complexity); sequence MSLRSSYSVRSSTSQVPVSQMSQMSQMS. The disordered stretch occupies residues 1-36; the sequence is MSLRSSYSVRSSTSQVPVSQMSQMSQMSIKRTTNVP. Residues 2–88 form a head region; it reads SLRSSYSVRS…TGATGDIMGN (87 aa). The segment at 89–123 is coil 1A; it reads EKMAMQNLNDRLASYLRSETLEQANSKLELKIREA. Residues 89-399 enclose the IF rod domain; sequence EKMAMQNLND…RLLDGGDFKL (311 aa). The segment at 124-140 is linker 1; it reads LEKKGPEVCDYSRFQPI. Residues 141–232 form a coil 1B region; the sequence is IDDLRRKIFD…KNHDNEVMEL (92 aa). The tract at residues 233–256 is linker 12; sequence RNQISHSGVQVDVDAPKGQDLAKI. The tract at residues 257 to 394 is coil 2; it reads MEEIRSKYEK…IATYRRLLDG (138 aa). A tail region spans residues 395-435; it reads GDFKLQDALEEQKRVKVMTVTQTLVDGKVVSSSTETKEKKF.

It belongs to the intermediate filament family. In terms of assembly, heterotetramer of two type I and two type II keratins. Keratin-18 associates with keratin-8. Phosphorylated. Post-translationally, proteolytically cleaved by caspases during epithelial cell apoptosis. In terms of tissue distribution, abundantly expressed in an even distribution throughout the optic nerve, localizing specifically to the astrocyte domains. Moderately expressed in spinal cord, brain, liver and oocytes.

Functionally, when phosphorylated, plays a role in filament reorganization. This chain is Keratin, type I cytoskeletal 18 (krt18), found in Carassius auratus (Goldfish).